A 363-amino-acid chain; its full sequence is Flagellar P-ring protein (363 aa).

An N-terminal signal peptide occupies residues 1–18; it reads MWKKVLIAIVFITSFSFA.

It belongs to the FlgI family. The basal body constitutes a major portion of the flagellar organelle and consists of four rings (L,P,S, and M) mounted on a central rod.

Its subcellular location is the periplasm. The protein resides in the bacterial flagellum basal body. Functionally, assembles around the rod to form the L-ring and probably protects the motor/basal body from shearing forces during rotation. The protein is Flagellar P-ring protein of Sulfurihydrogenibium sp. (strain YO3AOP1).